The chain runs to 560 residues: 2-succinyl-5-enolpyruvyl-6-hydroxy-3-cyclohexene-1-carboxylate synthase (560 aa).

This sequence belongs to the TPP enzyme family. MenD subfamily. As to quaternary structure, homodimer. Mg(2+) serves as cofactor. Requires Mn(2+) as cofactor. It depends on thiamine diphosphate as a cofactor.

It carries out the reaction isochorismate + 2-oxoglutarate + H(+) = 5-enolpyruvoyl-6-hydroxy-2-succinyl-cyclohex-3-ene-1-carboxylate + CO2. The protein operates within quinol/quinone metabolism; 1,4-dihydroxy-2-naphthoate biosynthesis; 1,4-dihydroxy-2-naphthoate from chorismate: step 2/7. It participates in quinol/quinone metabolism; menaquinone biosynthesis. Its function is as follows. Catalyzes the thiamine diphosphate-dependent decarboxylation of 2-oxoglutarate and the subsequent addition of the resulting succinic semialdehyde-thiamine pyrophosphate anion to isochorismate to yield 2-succinyl-5-enolpyruvyl-6-hydroxy-3-cyclohexene-1-carboxylate (SEPHCHC). The chain is 2-succinyl-5-enolpyruvyl-6-hydroxy-3-cyclohexene-1-carboxylate synthase from Staphylococcus saprophyticus subsp. saprophyticus (strain ATCC 15305 / DSM 20229 / NCIMB 8711 / NCTC 7292 / S-41).